We begin with the raw amino-acid sequence, 288 residues long: Bifunctional protein FolD (288 aa).

NADP(+)-binding positions include 166 to 168 and isoleucine 232; that span reads GAS.

Belongs to the tetrahydrofolate dehydrogenase/cyclohydrolase family. Homodimer.

It catalyses the reaction (6R)-5,10-methylene-5,6,7,8-tetrahydrofolate + NADP(+) = (6R)-5,10-methenyltetrahydrofolate + NADPH. The enzyme catalyses (6R)-5,10-methenyltetrahydrofolate + H2O = (6R)-10-formyltetrahydrofolate + H(+). Its pathway is one-carbon metabolism; tetrahydrofolate interconversion. In terms of biological role, catalyzes the oxidation of 5,10-methylenetetrahydrofolate to 5,10-methenyltetrahydrofolate and then the hydrolysis of 5,10-methenyltetrahydrofolate to 10-formyltetrahydrofolate. The chain is Bifunctional protein FolD from Shigella dysenteriae serotype 1 (strain Sd197).